Here is a 257-residue protein sequence, read N- to C-terminus: 24 kDa outer membrane protein (257 aa).

The N-terminal stretch at 1–21 (MKNKSKLLACCLMALPISSFS) is a signal peptide.

This sequence belongs to the MipA/OmpV family.

It is found in the cell outer membrane. In Pasteurella multocida (strain Pm70), this protein is 24 kDa outer membrane protein.